Here is a 390-residue protein sequence, read N- to C-terminus: MRKMLAAVSRVLSGVAQKPASRVLVASRHFANDATFEIKKCDLHRLEEGPPVTTVLTREDGLKYYRMMQTVRRMELKADQLYKQKIIRGFCHLCDGQEACCVGLEAGINPTDHLITAYRAHGFTFTRGLSVREILAELTGRRGGCAKGKGGSMHMYAKNFYGGNGIVGAQVPLGAGIALACKYNGKDEVCLTLYGDGAANQGQIFEAYNMAALWKLPCIFICENNRYGMGTSVERAAASTDYYKRGDFIPGLRVDGMDILCVREATKFAAAYCRSGKGPILMELQTYRYHGHSMSDPGVSYRTREEIQEVRSKSDPIMLLKDRMVNSNLASVEELKEIDVEVRKEIEDAAQFATADPEPPLEELGYHIYCNDPPFEVRGANQWIKFKSIS.

A mitochondrion-targeting transit peptide spans 1 to 29 (MRKMLAAVSRVLSGVAQKPASRVLVASRH). An N6-acetyllysine; alternate modification is found at Lys-63. Lys-63 carries the post-translational modification N6-succinyllysine; alternate. Pyruvate is bound by residues His-92, Tyr-118, Arg-119, Ala-157, Gly-165, Val-167, Asp-196, Gly-197, Ala-198, Asn-225, and Tyr-227. Residues Tyr-118 and Arg-119 each contribute to the thiamine diphosphate site. Positions 165, 167, 196, 197, 198, and 225 each coordinate thiamine diphosphate. Asp-196 serves as a coordination point for Mg(2+). Residues Asn-225 and Tyr-227 each coordinate Mg(2+). The residue at position 232 (Ser-232) is a Phosphoserine; by PDK1. Lys-244 carries the N6-acetyllysine; alternate modification. N6-succinyllysine; alternate is present on Lys-244. Lys-267 carries the N6-acetyllysine modification. Lys-277 is modified (N6-succinyllysine). His-292 lines the thiamine diphosphate pocket. Ser-293 is modified (phosphoserine; by PDK1, PDK2, PDK3 and PDK4). Residue Ser-295 is modified to Phosphoserine. Residue Ser-300 is modified to Phosphoserine; by PDK1, PDK2, PDK3 and PDK4. Tyr-301 is subject to Phosphotyrosine. Lys-313 bears the N6-acetyllysine; alternate mark. Residue Lys-313 is modified to N6-succinyllysine; alternate. Lys-321 and Lys-336 each carry N6-acetyllysine. At Lys-385 the chain carries N6-succinyllysine.

In terms of assembly, heterotetramer of two PDHA1 and two PDHB subunits. The heterotetramer interacts with DLAT, and is part of the multimeric pyruvate dehydrogenase complex that contains multiple copies of pyruvate dehydrogenase (E1), dihydrolipoamide acetyltransferase (DLAT, E2) and lipoamide dehydrogenase (DLD, E3). These subunits are bound to an inner core composed of about 48 DLAT and 12 PDHX molecules. Thiamine diphosphate is required as a cofactor. It depends on Mg(2+) as a cofactor. In terms of processing, phosphorylation at Ser-232, Ser-293 and Ser-300 by PDK family kinases inactivates the enzyme; for this phosphorylation at a single site is sufficient. Phosphorylation at Ser-293 interferes with access to active site, and thereby inactivates the enzyme. Dephosphorylation at all three sites, i.e. at Ser-232, Ser-293 and Ser-300, is required for reactivation. Post-translationally, acetylation alters the phosphorylation pattern. Deacetylated by SIRT3.

It is found in the mitochondrion matrix. It catalyses the reaction N(6)-[(R)-lipoyl]-L-lysyl-[protein] + pyruvate + H(+) = N(6)-[(R)-S(8)-acetyldihydrolipoyl]-L-lysyl-[protein] + CO2. With respect to regulation, pyruvate dehydrogenase activity is inhibited by phosphorylation of PDHA1; it is reactivated by dephosphorylation. The pyruvate dehydrogenase complex catalyzes the overall conversion of pyruvate to acetyl-CoA and CO(2), and thereby links the glycolytic pathway to the tricarboxylic cycle. The sequence is that of Pyruvate dehydrogenase E1 component subunit alpha, somatic form, mitochondrial (PDHA1) from Bos taurus (Bovine).